The chain runs to 237 residues: Large ribosomal subunit protein uL1 (237 aa).

Belongs to the universal ribosomal protein uL1 family. As to quaternary structure, part of the 50S ribosomal subunit.

Binds directly to 23S rRNA. The L1 stalk is quite mobile in the ribosome, and is involved in E site tRNA release. In terms of biological role, protein L1 is also a translational repressor protein, it controls the translation of the L11 operon by binding to its mRNA. This chain is Large ribosomal subunit protein uL1, found in Thermosynechococcus vestitus (strain NIES-2133 / IAM M-273 / BP-1).